Here is a 243-residue protein sequence, read N- to C-terminus: 7-cyano-7-deazaguanine synthase (243 aa).

14–24 provides a ligand contact to ATP; sequence FSGGQDSATCL. Zn(2+) is bound by residues Cys-202, Cys-217, Cys-220, and Cys-223.

This sequence belongs to the QueC family. It depends on Zn(2+) as a cofactor.

It carries out the reaction 7-carboxy-7-deazaguanine + NH4(+) + ATP = 7-cyano-7-deazaguanine + ADP + phosphate + H2O + H(+). Its pathway is purine metabolism; 7-cyano-7-deazaguanine biosynthesis. Its function is as follows. Catalyzes the ATP-dependent conversion of 7-carboxy-7-deazaguanine (CDG) to 7-cyano-7-deazaguanine (preQ(0)). The protein is 7-cyano-7-deazaguanine synthase of Paraburkholderia phymatum (strain DSM 17167 / CIP 108236 / LMG 21445 / STM815) (Burkholderia phymatum).